A 336-amino-acid chain; its full sequence is MIREAIYEIVNRNNLTIDKTKEVMNRIMDGGATDAQIASFLTSLRLKGETIEEITACAMVMREKCQKLNPEFDVLDIVGTGGDELATFNISTISSFIIAAAGVPVAKHGNRSVSSKCGSADLLEVLGVNIMLTPQQCEAILKKVGMCFLMAQTFHSSMKYVAKVRKELGIRTIFNILGPLANPAKASYELIGVYDENLVEPIASVLVNLGVKRAMVVHGHDGLDEITLSDTTTICEVNRGRLNSFFITPEQFGLKRCSLSELIGGTPQENREIALNILNGEQGAKRDTVVLNSAVCLYMFYDNMTLKQCLRMAQDMIDSKKALNKLDEFIKASHET.

5-phospho-alpha-D-ribose 1-diphosphate-binding positions include G79, 82 to 83 (GD), T87, 89 to 92 (NIST), 107 to 115 (KHGNRSVSS), and S119. Residue G79 participates in anthranilate binding. S91 serves as a coordination point for Mg(2+). N110 is a binding site for anthranilate. An anthranilate-binding site is contributed by R165. Residues D224 and E225 each contribute to the Mg(2+) site.

It belongs to the anthranilate phosphoribosyltransferase family. As to quaternary structure, homodimer. Requires Mg(2+) as cofactor.

It carries out the reaction N-(5-phospho-beta-D-ribosyl)anthranilate + diphosphate = 5-phospho-alpha-D-ribose 1-diphosphate + anthranilate. The protein operates within amino-acid biosynthesis; L-tryptophan biosynthesis; L-tryptophan from chorismate: step 2/5. In terms of biological role, catalyzes the transfer of the phosphoribosyl group of 5-phosphorylribose-1-pyrophosphate (PRPP) to anthranilate to yield N-(5'-phosphoribosyl)-anthranilate (PRA). The protein is Anthranilate phosphoribosyltransferase of Endomicrobium trichonymphae.